Here is a 609-residue protein sequence, read N- to C-terminus: MNNNFDAIVIGAGHAGVEAAFALAKSNNKVALITFDLSKITMMPCNPSIGGPAKGIITREIDALGGIQGYYSDLAMIQIKMLNDSKGPAVRAIRAQIDKEKYSKLIREDLQKNSNITLIEAGVYEIKADKKVFKSVVLSTGEEIFAKVCVLTTGTYMNSQILRGSSVTVSGPDGQKTTNKISESLKKLGFELQRFKTGTPARIYKSSIDFSKVEKEILDTNDLNFSNRSNKKLNQQVSCYLTYTNEKTHEIILNNLDKSSMYSGLIKGTGPRYCPSIEDKVVRFSDRNRHQVFFEPETLDETIIYLNGLSTSMPEDIQMQFLKTIPGLENLKIQKYGYAIEYDALNSLDLKHSLETKVIKNFFAAGQINGTSGYEEAAAQGLIAGINAALKLKNKKPLVLKRSDAYIGVLIDDLVIKGTKEPYRMLTSRAEYRLLLRHDNSDYRLSKYGYKLGLISKDEYSQIQKKYKNINSKINYLSKKYLSTNSNIAKKYNIKEATSYLKLLLRPEINPKDILKNYKYQNELLIKIKLEGYIKKQKQDASRMKNLEKIKIPNNINYDKVLNLASEAKDKLKIIKPETIAQAYRISGINPSDIQMLIFHLKTYKKYDN.

Residues 11–16 (GAGHAG), V123, and T178 contribute to the FAD site. 270–284 (GPRYCPSIEDKVVRF) contacts NAD(+). Q367 is an FAD binding site.

It belongs to the MnmG family. As to quaternary structure, homodimer. Heterotetramer of two MnmE and two MnmG subunits. FAD serves as cofactor.

It is found in the cytoplasm. Its function is as follows. NAD-binding protein involved in the addition of a carboxymethylaminomethyl (cmnm) group at the wobble position (U34) of certain tRNAs, forming tRNA-cmnm(5)s(2)U34. This chain is tRNA uridine 5-carboxymethylaminomethyl modification enzyme MnmG, found in Mycoplasmopsis synoviae (strain 53) (Mycoplasma synoviae).